The chain runs to 70 residues: NAD(P)H-quinone oxidoreductase subunit L (70 aa).

2 helical membrane-spanning segments follow: residues 2–22 (IVPLLYLALAGAYLLVVPVAL) and 39–59 (TFMYFLVFLFFPGLLVLSPFV).

It belongs to the complex I NdhL subunit family. As to quaternary structure, NDH-1 can be composed of about 15 different subunits; different subcomplexes with different compositions have been identified which probably have different functions.

The protein resides in the cellular thylakoid membrane. The catalysed reaction is a plastoquinone + NADH + (n+1) H(+)(in) = a plastoquinol + NAD(+) + n H(+)(out). The enzyme catalyses a plastoquinone + NADPH + (n+1) H(+)(in) = a plastoquinol + NADP(+) + n H(+)(out). Its function is as follows. NDH-1 shuttles electrons from an unknown electron donor, via FMN and iron-sulfur (Fe-S) centers, to quinones in the respiratory and/or the photosynthetic chain. The immediate electron acceptor for the enzyme in this species is believed to be plastoquinone. Couples the redox reaction to proton translocation, and thus conserves the redox energy in a proton gradient. Cyanobacterial NDH-1 also plays a role in inorganic carbon-concentration. The protein is NAD(P)H-quinone oxidoreductase subunit L of Trichormus variabilis (strain ATCC 29413 / PCC 7937) (Anabaena variabilis).